The primary structure comprises 446 residues: Deoxyguanosinetriphosphate triphosphohydrolase-like protein (446 aa).

The tract at residues 1 to 28 (MSSSVWQERRHGEDKQRRNDHRSPFQRD) is disordered. A compositionally biased stretch (basic and acidic residues) spans 7–28 (QERRHGEDKQRRNDHRSPFQRD). Residues 59 to 252 (RLTHSLEVSQ…MELADDIAYA (194 aa)) form the HD domain.

Belongs to the dGTPase family. Type 2 subfamily.

This Shewanella sp. (strain MR-7) protein is Deoxyguanosinetriphosphate triphosphohydrolase-like protein.